We begin with the raw amino-acid sequence, 643 residues long: Sodium/iodide cotransporter (643 aa).

Over 1–14 the chain is Extracellular; it reads MEAVETGERPTFGA. The helical transmembrane segment at 15-31 threads the bilayer; it reads WDYGVFALMLLVSTGIG. Topologically, residues 32-56 are cytoplasmic; that stretch reads LWVGLARGGQRSAEDFFTGGRRLAA. Residues 57–80 traverse the membrane as a discontinuously helical segment; it reads LPVGLSLSASFMSAVQVLGVPSEA. Na(+)-binding residues include Ser69, Val71, and Gln72. Val76 is an iodide binding site. At 81–84 the chain is on the extracellular side; it reads YRYG. A helical membrane pass occupies residues 85–105; that stretch reads LKFLWMCLGQLLNSVLTALLF. Met90 contacts iodide. Topologically, residues 106-130 are cytoplasmic; that stretch reads MPVFYRLGLTSTYEYLEMRFSRAVR. The chain crosses the membrane as a helical span at residues 131–157; that stretch reads LCGTLQYIVATMLYTGIVIYAPALILN. Position 144 (Tyr144) interacts with Na(+). Over 158–163 the chain is Extracellular; it reads QVTGLD. Residues 164 to 181 form a helical membrane-spanning segment; the sequence is IWASLLSTGIICTFYTAV. At 182–189 the chain is on the cytoplasmic side; that stretch reads GGMKAVVW. A helical membrane pass occupies residues 190-208; it reads TDVFQVVVMLSGFWVVLAR. The Extracellular portion of the chain corresponds to 209–243; it reads GVMLVGGPRQVLTLAQNHSRINLMDFNPDPRSRYT. Residues 244-266 traverse the membrane as a discontinuously helical segment; sequence FWTFVVGGTLVWLSMYGVNQAQV. Trp255 contributes to the iodide binding site. Met258 lines the Na(+) pocket. The Cytoplasmic portion of the chain corresponds to 267–278; the sequence is QRYVACRTEKQA. A helical transmembrane segment spans residues 279 to 301; it reads KLALLINQVGLFLIVSSAACCGI. The Extracellular portion of the chain corresponds to 302–335; that stretch reads VMFVFYTDCDPLLLGRISAPDQYMPLLVLDIFED. Residues 336–363 traverse the membrane as a helical segment; the sequence is LPGVPGLFLACAYSGTLSTASTSINAMA. Over 364–386 the chain is Cytoplasmic; the sequence is AVTVEDLIKPRLRSLAPRKLVII. A helical membrane pass occupies residues 387-408; sequence SKGLSLIYGSACLTVAALSSLL. Over 409-411 the chain is Extracellular; the sequence is GGG. A helical membrane pass occupies residues 412 to 437; sequence VLQGSFTVMGVISGPLLGAFILGMFL. Position 413 (Leu413) interacts with iodide. Ser416 and Phe417 together coordinate Na(+). Phe417 contacts iodide. Residues 438-441 are Cytoplasmic-facing; that stretch reads PACN. A helical membrane pass occupies residues 442-465; the sequence is TPGVLAGLGAGLALSLWVALGATL. Residues 466 to 525 are Extracellular-facing; it reads YPPSEQTMRVLPSSAARCVALSVNASGLLDPALLPANDSSRAPSSGMDASRPALADSFYA. Asn489 and Asn502 each carry an N-linked (GlcNAc...) asparagine glycan. The chain crosses the membrane as a helical span at residues 526–550; that stretch reads ISYLYYGALGTLTTVLCGALISCLT. Over 551–643 the chain is Cytoplasmic; the sequence is GPTKRSTLAP…GGRDQQETNL (93 aa). Ser556 bears the Phosphoserine; by PKA mark. The disordered stretch occupies residues 623 to 643; the sequence is AGSWTPCVGHDGGRDQQETNL. The segment covering 633–643 has biased composition (basic and acidic residues); it reads DGGRDQQETNL.

This sequence belongs to the sodium:solute symporter (SSF) (TC 2.A.21) family. Monomer. Glycosylated. As to expression, expression is primarily in thyroid tissue, but also to a lower extent in mammary gland and ovary. Expression is reduced in tumors.

It localises to the cell membrane. It is found in the cytoplasm. The enzyme catalyses iodide(out) + 2 Na(+)(out) = iodide(in) + 2 Na(+)(in). The catalysed reaction is chlorate(out) + 2 Na(+)(out) = chlorate(in) + 2 Na(+)(in). It catalyses the reaction thiocyanate(out) + 2 Na(+)(out) = thiocyanate(in) + 2 Na(+)(in). It carries out the reaction nitrate(out) + 2 Na(+)(out) = nitrate(in) + 2 Na(+)(in). The enzyme catalyses selenocyanate(out) + 2 Na(+)(out) = selenocyanate(in) + 2 Na(+)(in). Dysidenin and perchlorate inhibit iodide transport activity. Oxyanions inhibit iodide transport activity by blocking the binding sites for iodide and one of the sodium ions. Sodium:iodide symporter that mediates the transport of iodide into the thyroid gland. Can also mediate the transport of chlorate, thiocynate, nitrate and selenocynate. This chain is Sodium/iodide cotransporter (SLC5A5), found in Homo sapiens (Human).